Here is a 73-residue protein sequence, read N- to C-terminus: UPF0235 protein PERMA_1406 (73 aa).

The protein belongs to the UPF0235 family.

This Persephonella marina (strain DSM 14350 / EX-H1) protein is UPF0235 protein PERMA_1406.